Reading from the N-terminus, the 239-residue chain is Purine nucleoside phosphorylase DeoD-type (239 aa).

H5 serves as a coordination point for a purine D-ribonucleoside. Residues G21, R25, R44, and 88 to 91 each bind phosphate; that span reads RIGS. A purine D-ribonucleoside contacts are provided by residues 180–182 and 204–205; these read EME and TD. The active-site Proton donor is D205.

It belongs to the PNP/UDP phosphorylase family. In terms of assembly, homohexamer; trimer of homodimers.

It carries out the reaction a purine D-ribonucleoside + phosphate = a purine nucleobase + alpha-D-ribose 1-phosphate. The catalysed reaction is a purine 2'-deoxy-D-ribonucleoside + phosphate = a purine nucleobase + 2-deoxy-alpha-D-ribose 1-phosphate. In terms of biological role, catalyzes the reversible phosphorolytic breakdown of the N-glycosidic bond in the beta-(deoxy)ribonucleoside molecules, with the formation of the corresponding free purine bases and pentose-1-phosphate. This is Purine nucleoside phosphorylase DeoD-type from Aliivibrio fischeri (strain ATCC 700601 / ES114) (Vibrio fischeri).